Reading from the N-terminus, the 78-residue chain is Large ribosomal subunit protein bL28 (78 aa).

Belongs to the bacterial ribosomal protein bL28 family.

The polypeptide is Large ribosomal subunit protein bL28 (Synechococcus sp. (strain ATCC 27144 / PCC 6301 / SAUG 1402/1) (Anacystis nidulans)).